Here is a 336-residue protein sequence, read N- to C-terminus: Protein SphX (336 aa).

Residues 1–27 (MFDLSRLSRGIVPMALLLLGISACTPS) form the signal peptide.

The protein belongs to the PstS family.

Functionally, may be involved in the system for phosphate transport across the cytoplasmic membrane. The polypeptide is Protein SphX (sphX) (Synechocystis sp. (strain ATCC 27184 / PCC 6803 / Kazusa)).